A 483-amino-acid polypeptide reads, in one-letter code: Cobyric acid synthase (483 aa).

The GATase cobBQ-type domain maps to 248-434; sequence ALRVVVPVLP…LHGLFEQPSA (187 aa). Cys-329 functions as the Nucleophile in the catalytic mechanism. The active site involves His-426.

Belongs to the CobB/CobQ family. CobQ subfamily.

It functions in the pathway cofactor biosynthesis; adenosylcobalamin biosynthesis. Catalyzes amidations at positions B, D, E, and G on adenosylcobyrinic A,C-diamide. NH(2) groups are provided by glutamine, and one molecule of ATP is hydrogenolyzed for each amidation. The polypeptide is Cobyric acid synthase (Ectopseudomonas mendocina (strain ymp) (Pseudomonas mendocina)).